A 373-amino-acid chain; its full sequence is Cobalt-precorrin-5B C(1)-methyltransferase (373 aa).

The protein belongs to the CbiD family.

The enzyme catalyses Co-precorrin-5B + S-adenosyl-L-methionine = Co-precorrin-6A + S-adenosyl-L-homocysteine. The protein operates within cofactor biosynthesis; adenosylcobalamin biosynthesis; cob(II)yrinate a,c-diamide from sirohydrochlorin (anaerobic route): step 6/10. Catalyzes the methylation of C-1 in cobalt-precorrin-5B to form cobalt-precorrin-6A. In Listeria welshimeri serovar 6b (strain ATCC 35897 / DSM 20650 / CCUG 15529 / CIP 8149 / NCTC 11857 / SLCC 5334 / V8), this protein is Cobalt-precorrin-5B C(1)-methyltransferase.